The chain runs to 479 residues: Anaerobic nitric oxide reductase flavorubredoxin (479 aa).

The tract at residues 30 to 210 (LRGSSYNSYL…PFSRLVTPKI (181 aa)) is zinc metallo-hydrolase. Fe cation contacts are provided by histidine 79, glutamate 81, aspartate 83, histidine 147, aspartate 166, and histidine 227. The region spanning 254–393 (ITIFYDTMSN…LCREHGREIA (140 aa)) is the Flavodoxin-like domain. FMN-binding positions include 260 to 264 (TMSNN) and 342 to 369 (AFGS…EMSL). The Rubredoxin-like domain occupies 423-474 (GPRMQCSVCQWIYDPAKGEPMQDVAPGTPWSEVPDNFLCPECSLGKDVFDEL). Cysteine 428, cysteine 431, cysteine 461, and cysteine 464 together coordinate Fe cation.

It in the N-terminal section; belongs to the zinc metallo-hydrolase group 3 family. Homotetramer. Fe cation serves as cofactor. Requires FMN as cofactor.

It is found in the cytoplasm. It participates in nitrogen metabolism; nitric oxide reduction. Its function is as follows. Anaerobic nitric oxide reductase; uses NADH to detoxify nitric oxide (NO), protecting several 4Fe-4S NO-sensitive enzymes. Has at least 2 reductase partners, only one of which (NorW, flavorubredoxin reductase) has been identified. NO probably binds to the di-iron center; electrons enter from the NorW at rubredoxin and are transferred sequentially to the FMN center and the di-iron center. Also able to function as an aerobic oxygen reductase. This is Anaerobic nitric oxide reductase flavorubredoxin from Shigella sonnei (strain Ss046).